The sequence spans 216 residues: 3-keto-L-gulonate-6-phosphate decarboxylase UlaD (216 aa).

Asp-11 contacts substrate. The Mg(2+) site is built by Glu-33 and Asp-62. Arg-192 contributes to the substrate binding site.

The protein belongs to the HPS/KGPDC family. KGPDC subfamily. As to quaternary structure, homodimer. Mg(2+) serves as cofactor.

The enzyme catalyses 3-dehydro-L-gulonate 6-phosphate + H(+) = L-xylulose 5-phosphate + CO2. Its pathway is cofactor degradation; L-ascorbate degradation; D-xylulose 5-phosphate from L-ascorbate: step 2/4. Its function is as follows. Catalyzes the decarboxylation of 3-keto-L-gulonate-6-P into L-xylulose-5-P. Is involved in the anaerobic L-ascorbate utilization. The polypeptide is 3-keto-L-gulonate-6-phosphate decarboxylase UlaD (Escherichia fergusonii (strain ATCC 35469 / DSM 13698 / CCUG 18766 / IAM 14443 / JCM 21226 / LMG 7866 / NBRC 102419 / NCTC 12128 / CDC 0568-73)).